A 139-amino-acid polypeptide reads, in one-letter code: D-ribose pyranase (139 aa).

H20 serves as the catalytic Proton donor. Substrate-binding positions include D28, H106, and 128-130 (YAN).

This sequence belongs to the RbsD / FucU family. RbsD subfamily. As to quaternary structure, homodecamer.

Its subcellular location is the cytoplasm. It catalyses the reaction beta-D-ribopyranose = beta-D-ribofuranose. The protein operates within carbohydrate metabolism; D-ribose degradation; D-ribose 5-phosphate from beta-D-ribopyranose: step 1/2. Catalyzes the interconversion of beta-pyran and beta-furan forms of D-ribose. The polypeptide is D-ribose pyranase (Salmonella typhi).